Reading from the N-terminus, the 388-residue chain is Mannitol-1-phosphate 5-dehydrogenase (388 aa).

Residue Ala-5–Gly-16 participates in NAD(+) binding. Lys-213 is a catalytic residue.

Belongs to the mannitol dehydrogenase family. Monomer.

It carries out the reaction D-mannitol 1-phosphate + NAD(+) = beta-D-fructose 6-phosphate + NADH + H(+). Functionally, catalyzes the NAD(H)-dependent interconversion of D-fructose 6-phosphate and D-mannitol 1-phosphate in the metabolism of mannitol. Has a strong preference for NADH over NADPH. This Aspergillus niger (strain ATCC MYA-4892 / CBS 513.88 / FGSC A1513) protein is Mannitol-1-phosphate 5-dehydrogenase (mpdA).